We begin with the raw amino-acid sequence, 66 residues long: UPF0337 protein BT9727_0908 (66 aa).

Residues 1 to 22 (MSENGLKEQITGKVEKTKGQVK) are disordered. Residues 13–22 (KVEKTKGQVK) are compositionally biased toward basic and acidic residues.

This sequence belongs to the UPF0337 (CsbD) family.

This Bacillus thuringiensis subsp. konkukian (strain 97-27) protein is UPF0337 protein BT9727_0908.